The sequence spans 197 residues: dCTP deaminase (197 aa).

Position 105–110 (105–110) interacts with dCTP; sequence RSSIAR. Glu-133 serves as the catalytic Proton donor/acceptor. DCTP contacts are provided by Tyr-166 and Gln-177. The segment at 172 to 197 is disordered; it reads NKYAGQKDPKPSRLAEELSLEQLRGR. A compositionally biased stretch (basic and acidic residues) spans 176–187; that stretch reads GQKDPKPSRLAE.

Belongs to the dCTP deaminase family. In terms of assembly, homotrimer.

The catalysed reaction is dCTP + H2O + H(+) = dUTP + NH4(+). Its pathway is pyrimidine metabolism; dUMP biosynthesis; dUMP from dCTP (dUTP route): step 1/2. Functionally, catalyzes the deamination of dCTP to dUTP. This chain is dCTP deaminase, found in Thermomicrobium roseum (strain ATCC 27502 / DSM 5159 / P-2).